Reading from the N-terminus, the 864-residue chain is MPDISLKVLSNEIKISIQELIKELSIIGITKTEDNYINVLEKNILLKHLESKKKYSLDTLVLQRKTRSTLRISTVGGKNKSVQVEVRKKRAYVKNNKFENESFLNEKKVIKHSMQKTSSLKNKEKKYIKNIEKIELNKSDSRSLNTKKENKLKISNKDEQNKKFNQHRESNSFDLNHKKRIKENKDIRISHKEEKQDYHLTTFLHARQAEDENDREVEIDKRNHGRILKNYRQKKNNKNFHNGRYNKEEIRTFNRNKKNSKQKNKPILLQQVFQKPESIINRDVIISNTITVSDLANKMAIKSSEVIKNMMNMGIIGTINHVLDQDTAQLIAEEMGHKVIVHRENALEELIMKDRDTGNDVSAIRAPVVTIMGHVDHGKTSLLDYIRSTKTAFYEAGGITQNIGAYHVKTDLGSITFLDTPGHSAFTAMRSRGVQITDIVILVVAADDGVMPQTIEAIQHAKEANVPVIVAINKIDKTDSDIDKVRNDLMKYNILSEEWGGENIFVSVSAKTGKGINKLLNVILLQAEMLELKAVTTGMAEGIVVESFLDKGRGPIATVLVKKGQLKKGDVILCGFEYGRIKSLRDASGNEVFSAGPSIPVEVLGLSKVPFSGDVVTVVRDEKKAREVASYRKEKSREKKLSNQNRINLENMFDDINKNNVSELKIILKSDVQGSLEAISGALLKLSTEEVKIKIIGLGIGGITETDASLALASNAIILGFNVRADTSAKKIINSEHLDLRYYSVIYDLLDEVKAAMTGLLSPEYKENIIGLAEVRNTFKSPKFGLIAGCMVTEGVIKRSNPIHILRNNIVIYEGELESLRRFKEDVNEIRNGLECGIGIKNYNDIRVGDIIEVFEVREMKRIL.

Residues 140-171 (DSRSLNTKKENKLKISNKDEQNKKFNQHRESN) show a composition bias toward basic and acidic residues. The tract at residues 140-179 (DSRSLNTKKENKLKISNKDEQNKKFNQHRESNSFDLNHKK) is disordered. A tr-type G domain is found at 364 to 533 (IRAPVVTIMG…LLQAEMLELK (170 aa)). Positions 373–380 (GHVDHGKT) are G1. A GTP-binding site is contributed by 373–380 (GHVDHGKT). The interval 398–402 (GITQN) is G2. Residues 419–422 (DTPG) are G3. Residues 419 to 423 (DTPGH) and 473 to 476 (NKID) contribute to the GTP site. The tract at residues 473 to 476 (NKID) is G4. Residues 509–511 (SAK) are G5.

The protein belongs to the TRAFAC class translation factor GTPase superfamily. Classic translation factor GTPase family. IF-2 subfamily.

The protein localises to the cytoplasm. One of the essential components for the initiation of protein synthesis. Protects formylmethionyl-tRNA from spontaneous hydrolysis and promotes its binding to the 30S ribosomal subunits. Also involved in the hydrolysis of GTP during the formation of the 70S ribosomal complex. This Buchnera aphidicola subsp. Acyrthosiphon pisum (strain Tuc7) protein is Translation initiation factor IF-2.